We begin with the raw amino-acid sequence, 121 residues long: MALNIENIVAELENATILELSELVKAIEEKFDVTAAAPVAAAAGAGDAAAAKDSFDVELTSAGDKKVAVIKEVRGITGLGLKEAKELVDGAPTMIKEGLSESEANEVKEKLEAAGASITLK.

It belongs to the bacterial ribosomal protein bL12 family. In terms of assembly, homodimer. Part of the ribosomal stalk of the 50S ribosomal subunit. Forms a multimeric L10(L12)X complex, where L10 forms an elongated spine to which 2 to 4 L12 dimers bind in a sequential fashion. Binds GTP-bound translation factors.

Its function is as follows. Forms part of the ribosomal stalk which helps the ribosome interact with GTP-bound translation factors. Is thus essential for accurate translation. This is Large ribosomal subunit protein bL12 from Lactococcus lactis subsp. lactis (strain IL1403) (Streptococcus lactis).